Consider the following 127-residue polypeptide: Protein chibby homolog 1 (127 aa).

The tract at residues 1 to 25 is disordered; sequence MPLFGSIFSPKKTPPRKSASLSNLH. Phosphoserine is present on residues Ser-9 and Ser-20. A minimal region for the interaction with PKD2 region spans residues 60–112; it reads VADSVISGGVDRRETQRLRKRNQQLEEENNLLRLKVDILLDMLSETTAESHLK. Positions 68-110 form a coiled coil; the sequence is GVDRRETQRLRKRNQQLEEENNLLRLKVDILLDMLSETTAESH. The interval 77 to 98 is leucine-zipper; mediates homodimerization; that stretch reads LRKRNQQLEEENNLLRLKVDIL.

This sequence belongs to the chibby family. As to quaternary structure, homodimer. Homodimerization is essential for nuclear localization and interaction with KPNA4 but is dispensable for interaction with CTNNB1. Interacts with polycystin-2/PKD2 and GM130. Interacts with the C-terminal region of CTNNB1. Interacts (C-terminus) with TCIM (C-terminus), TCIM competes with CTNNB1 for the interaction with CBY1. Interacts with FAM92A; this interaction facilitates targeting of FAM92A to cilium basal body. Interacts with CIBAR2. Interacts with KPNA4.

Its subcellular location is the nucleus speckle. It localises to the cytoplasm. The protein resides in the cytoskeleton. The protein localises to the cilium basal body. It is found in the microtubule organizing center. Its subcellular location is the centrosome. It localises to the centriole. The protein resides in the golgi apparatus. The protein localises to the trans-Golgi network. It is found in the cell projection. Its subcellular location is the cilium. It localises to the flagellum. The protein resides in the nucleus. Inhibits the Wnt/Wingless pathway by binding to CTNNB1/beta-catenin and inhibiting beta-catenin-mediated transcriptional activation through competition with TCF/LEF transcription factors. Has also been shown to play a role in regulating the intracellular trafficking of polycystin-2/PKD2 and possibly of other intracellular proteins. Promotes adipocyte and cardiomyocyte differentiation. The protein is Protein chibby homolog 1 (Cby1) of Rattus norvegicus (Rat).